The chain runs to 464 residues: MGSPAHRPALLLLLPPLLLLLLLRVPPSRSFPGSGDSPLEDDEVGYSHPRYKDTPWCSPIKVKYGDVYCRAPQGGYYKTALGTRCDIRCQKGYELHGSSLLICQSNKRWSDKVICKQKRCPTLAMPANGGFKCVDGAYFNSRCEYYCSPGYTLKGERTVTCMDNKAWSGRPASCVDMEPPRIKCPSVKERIAEPNKLTVRVSWETPEGRDTADGILTDVILKGLPPGSNFPEGDHKIQYTVYDRAENKGTCKFRVKVRVKRCGKLNAPENGYMKCSSDGDNYGATCEFSCIGGYELQGSPARVCQSNLAWSGTEPTCAAMNVNVGVRTAAALLDQFYEKRRLLIVSTPTARNLLYRLQLGMLQQAQCGLDLRHITVVELVGVFPTLIGRIGAKIMPPALALQLRLLLRIPLYSFSMVLVDKHGMDKERYVSLVMPVALFNLIDTFPLRKEEMVLQAEMSQTCNT.

A signal peptide spans 1–30; that stretch reads MGSPAHRPALLLLLPPLLLLLLLRVPPSRS. A glycan (O-linked (Xyl...) (chondroitin sulfate) serine) is linked at serine 34. 5 cysteine pairs are disulfide-bonded: cysteine 57–cysteine 85, cysteine 69–cysteine 103, cysteine 89–cysteine 115, cysteine 120–cysteine 161, and cysteine 147–cysteine 174. 2 consecutive Sushi domains span residues 57–117 and 118–176; these read CSPI…ICKQ and KRCP…SCVD. In terms of domain architecture, HYR spans 177 to 259; sequence MEPPRIKCPS…TCKFRVKVRV (83 aa). In terms of domain architecture, Sushi 3 spans 260 to 319; it reads KRCGKLNAPENGYMKCSSDGDNYGATCEFSCIGGYELQGSPARVCQSNLAWSGTEPTCAA. 2 disulfide bridges follow: cysteine 262/cysteine 304 and cysteine 290/cysteine 317.

Detected in fibroblasts (at protein level). Retina and heart; less in placenta, pancreas, lung, liver, skeletal muscle, kidney and brain.

The protein resides in the cell surface. In terms of biological role, may be involved in phagocytosis during disk shedding, cell adhesion to cells other than the pigment epithelium or signal transduction. This is Sushi repeat-containing protein SRPX (SRPX) from Homo sapiens (Human).